Consider the following 129-residue polypeptide: Fluoride-specific ion channel FluC 2 (129 aa).

Transmembrane regions (helical) follow at residues 9-29, 37-57, 74-94, and 100-120; these read LGTL…RYLL, GTIL…YYVI, MVGA…LSTF, and YLLI…ILGI. 2 residues coordinate Na(+): Gly76 and Thr79.

This sequence belongs to the fluoride channel Fluc/FEX (TC 1.A.43) family.

The protein localises to the cell membrane. The enzyme catalyses fluoride(in) = fluoride(out). Its activity is regulated as follows. Na(+) is not transported, but it plays an essential structural role and its presence is essential for fluoride channel function. Fluoride-specific ion channel. Important for reducing fluoride concentration in the cell, thus reducing its toxicity. The protein is Fluoride-specific ion channel FluC 2 of Ligilactobacillus salivarius (strain UCC118) (Lactobacillus salivarius).